The sequence spans 66 residues: Large ribosomal subunit protein eL24 (66 aa).

Zn(2+)-binding residues include Cys-7, Cys-10, Cys-33, and Cys-37. The C4-type zinc finger occupies 7-37 (CSYCGKPFEPGTGKMYVRNDGRVLFFCSRKC).

Belongs to the eukaryotic ribosomal protein eL24 family. In terms of assembly, part of the 50S ribosomal subunit. Forms a cluster with proteins L3 and L14. Requires Zn(2+) as cofactor.

Binds to the 23S rRNA. This chain is Large ribosomal subunit protein eL24, found in Pyrococcus furiosus (strain ATCC 43587 / DSM 3638 / JCM 8422 / Vc1).